A 497-amino-acid polypeptide reads, in one-letter code: Cobyric acid synthase (497 aa).

The GATase cobBQ-type domain maps to 251–443 (DLKIGVVWYP…LHGLFDNDFF (193 aa)). The active-site Nucleophile is the cysteine 333. Histidine 435 is an active-site residue.

It belongs to the CobB/CobQ family. CobQ subfamily.

Its pathway is cofactor biosynthesis; adenosylcobalamin biosynthesis. In terms of biological role, catalyzes amidations at positions B, D, E, and G on adenosylcobyrinic A,C-diamide. NH(2) groups are provided by glutamine, and one molecule of ATP is hydrogenolyzed for each amidation. The sequence is that of Cobyric acid synthase from Carboxydothermus hydrogenoformans (strain ATCC BAA-161 / DSM 6008 / Z-2901).